A 454-amino-acid polypeptide reads, in one-letter code: MRCHLKKWVVVAAGLSILTSLYVYMQRAQSGNLKGSVIWTWDRESWMEGIKSHYLHFNISINVLGGVLQPSKKYLTVGLSSVRREKGFYLHDTLQSIFSESSEEELDQMVVVVLLADFDLPWIQQTADKISREFAVQLSKGRLLVIHANKEHYPPLTGLKRNFNDAPDRVSFRSKQNVDYSFLLHFSSNLSQYYIMLEDDVGCSRNFLSSIQQHIRSMTDSKWVTLEFSKLGYIGKLYQSKDLPTLARFLYNFYQEMPCDFLLSHFRRLLMQDKVIRFRPSLFQHMGTYSSFRGTYNRLKDEDFVQELADNPPADVRTNIQVFQTYVPEKAYSQDVEYFWGVSPIGTESFFLVVFREAVRISRVQIHTGSDGKDELASADVELGRVLVTGEPAVDCSGFKTLGSLQHGQFNEEGVQKLLPDAVVCLRIRVTAAQPEWVIISRIQVWTVKEDKTI.

At 1 to 6 the chain is on the cytoplasmic side; sequence MRCHLK. Residues 7-24 traverse the membrane as a helical; Signal-anchor for type II membrane protein segment; the sequence is KWVVVAAGLSILTSLYVY. Residues 25 to 454 are Lumenal-facing; the sequence is MQRAQSGNLK…VWTVKEDKTI (430 aa). N-linked (GlcNAc...) asparagine glycans are attached at residues Asn58 and Asn189.

Belongs to the glycosyltransferase 54 family. Requires a divalent metal cation as cofactor.

The protein resides in the golgi apparatus membrane. The enzyme catalyses N(4)-{beta-D-GlcNAc-(1-&gt;2)-alpha-D-Man-(1-&gt;3)-[beta-D-GlcNAc-(1-&gt;2)-alpha-D-Man-(1-&gt;6)]-beta-D-Man-(1-&gt;4)-beta-D-GlcNAc-(1-&gt;4)-beta-D-GlcNAc}-L-asparaginyl-[protein] + UDP-N-acetyl-alpha-D-glucosamine = N(4)-{beta-D-GlcNAc-(1-&gt;2)-[beta-D-GlcNAc-(1-&gt;4)]-alpha-D-Man-(1-&gt;3)-[beta-D-GlcNAc-(1-&gt;2)-alpha-D-Man-(1-&gt;6)]-beta-D-Man-(1-&gt;4)-beta-D-GlcNAc-(1-&gt;4)-beta-D-GlcNAc}-L-asparaginyl-[protein] + UDP + H(+). It participates in protein modification; protein glycosylation. In terms of biological role, glycosyltransferase that participates in the transfer of N-acetylglucosamine (GlcNAc) to the core mannose residues of N-linked glycans. Catalyzes the formation of the GlcNAcbeta1-4 branch on the GlcNAcbeta1-2Manalpha1-3 arm of the core structure of N-linked glycans. The sequence is that of Alpha-1,3-mannosyl-glycoprotein 4-beta-N-acetylglucosaminyltransferase C (mgat4c) from Danio rerio (Zebrafish).